Reading from the N-terminus, the 337-residue chain is MKKILFVVATIFMALFLNAKENDMRNLKDIYLAGGCFWGTQAYFDKIRGVIKTDVGYANGKSDKTDYHSLHYSGHAETVHITFDENIVSLAEILAHYFRIIDPFSVNKQGNDVGSQYRTGIYYNDSSLKNSISEFIKHEQTKYDKKIAVEVEPLKNYVLAEDYHQKYLDKNPGGYCHVDLSLADKPLYNESKFKAPSKDELKAKLSDLQYSVTQEKATERPYSSEYDKFDKKGIYVDIVSKKPLFSSSDKFDAGCGWPSFTKPITTDALGYNRDLSHGMERVEVTSNLANSHLGHVFTDGPKDKGGLRYCINGASLKFIPLEDMEKEGYKDYIIYVK.

The tract at residues 28–181 (KDIYLAGGCF…PGGYCHVDLS (154 aa)) is peptide methionine sulfoxide reductase A. The active site involves C36. In terms of domain architecture, MsrB spans 198–321 (KDELKAKLSD…NGASLKFIPL (124 aa)). The Nucleophile role is filled by C310.

It in the N-terminal section; belongs to the MsrA Met sulfoxide reductase family. In the C-terminal section; belongs to the MsrB Met sulfoxide reductase family.

The catalysed reaction is L-methionyl-[protein] + [thioredoxin]-disulfide + H2O = L-methionyl-(S)-S-oxide-[protein] + [thioredoxin]-dithiol. It catalyses the reaction [thioredoxin]-disulfide + L-methionine + H2O = L-methionine (S)-S-oxide + [thioredoxin]-dithiol. It carries out the reaction L-methionyl-[protein] + [thioredoxin]-disulfide + H2O = L-methionyl-(R)-S-oxide-[protein] + [thioredoxin]-dithiol. Its function is as follows. Has an important function as a repair enzyme for proteins that have been inactivated by oxidation. Catalyzes the reversible oxidation-reduction of methionine sulfoxide in proteins to methionine. In Campylobacter fetus, this protein is Peptide methionine sulfoxide reductase MsrA/MsrB (msrAB).